The chain runs to 344 residues: Heat-inducible transcription repressor HrcA (344 aa).

Belongs to the HrcA family.

Negative regulator of class I heat shock genes (grpE-dnaK-dnaJ and groELS operons). Prevents heat-shock induction of these operons. The polypeptide is Heat-inducible transcription repressor HrcA (Streptococcus equi subsp. equi (strain 4047)).